Here is a 294-residue protein sequence, read N- to C-terminus: 4-hydroxy-tetrahydrodipicolinate synthase (294 aa).

Thr45 lines the pyruvate pocket. Tyr133 functions as the Proton donor/acceptor in the catalytic mechanism. Lys161 acts as the Schiff-base intermediate with substrate in catalysis. Residue Ile203 coordinates pyruvate.

This sequence belongs to the DapA family. As to quaternary structure, homotetramer; dimer of dimers.

The protein resides in the cytoplasm. The enzyme catalyses L-aspartate 4-semialdehyde + pyruvate = (2S,4S)-4-hydroxy-2,3,4,5-tetrahydrodipicolinate + H2O + H(+). The protein operates within amino-acid biosynthesis; L-lysine biosynthesis via DAP pathway; (S)-tetrahydrodipicolinate from L-aspartate: step 3/4. Its function is as follows. Catalyzes the condensation of (S)-aspartate-beta-semialdehyde [(S)-ASA] and pyruvate to 4-hydroxy-tetrahydrodipicolinate (HTPA). In Shewanella sp. (strain MR-4), this protein is 4-hydroxy-tetrahydrodipicolinate synthase.